A 156-amino-acid polypeptide reads, in one-letter code: MRNPAKQEDLIKAFKALLKEEKFSSQGEIVLALQEEGFENINQSKVSRMLTKFGAVRTRNAKMEMVYCLPAELGVPTTSSPLKNLVLDVDYNDSVVVINTSPGAAQLIARLLDSLGKAEGILGSIAGDDTIFTTPARGFTVKQLHEAILRLFEQEL.

This sequence belongs to the ArgR family.

The protein resides in the cytoplasm. It participates in amino-acid biosynthesis; L-arginine biosynthesis [regulation]. In terms of biological role, regulates arginine biosynthesis genes. This is Arginine repressor from Yersinia pseudotuberculosis serotype I (strain IP32953).